The chain runs to 373 residues: UDP-N-acetylenolpyruvoylglucosamine reductase (373 aa).

The FAD-binding PCMH-type domain maps to 30–203 (LACMADSVVT…SRVGFRLHTD (174 aa)). Arg-180 is an active-site residue. Catalysis depends on Ser-258, which acts as the Proton donor. The active site involves Glu-356.

The protein belongs to the MurB family. FAD is required as a cofactor.

It localises to the cytoplasm. It carries out the reaction UDP-N-acetyl-alpha-D-muramate + NADP(+) = UDP-N-acetyl-3-O-(1-carboxyvinyl)-alpha-D-glucosamine + NADPH + H(+). It participates in cell wall biogenesis; peptidoglycan biosynthesis. In terms of biological role, cell wall formation. This chain is UDP-N-acetylenolpyruvoylglucosamine reductase, found in Psychrobacter cryohalolentis (strain ATCC BAA-1226 / DSM 17306 / VKM B-2378 / K5).